The following is a 201-amino-acid chain: Glycerol-3-phosphate acyltransferase (201 aa).

5 consecutive transmembrane segments (helical) span residues 10–30 (ALIL…GIVI), 59–79 (PAAL…VLIA), 87–107 (AAQL…WLGF), 116–136 (FLGT…LTWL), and 161–181 (ILLG…LIFI).

It belongs to the PlsY family. In terms of assembly, probably interacts with PlsX.

It localises to the cell inner membrane. It carries out the reaction an acyl phosphate + sn-glycerol 3-phosphate = a 1-acyl-sn-glycero-3-phosphate + phosphate. It participates in lipid metabolism; phospholipid metabolism. Its function is as follows. Catalyzes the transfer of an acyl group from acyl-phosphate (acyl-PO(4)) to glycerol-3-phosphate (G3P) to form lysophosphatidic acid (LPA). This enzyme utilizes acyl-phosphate as fatty acyl donor, but not acyl-CoA or acyl-ACP. The chain is Glycerol-3-phosphate acyltransferase from Cereibacter sphaeroides (strain ATCC 17029 / ATH 2.4.9) (Rhodobacter sphaeroides).